A 1103-amino-acid chain; its full sequence is Ataxin-2 homolog (1103 aa).

Over residues 1 to 10 the composition is skewed to basic residues; it reads MSQSKDKKKF. A disordered region spans residues 1–75; the sequence is MSQSKDKKKF…QQQQQQQQPF (75 aa). Over residues 11 to 28 the composition is skewed to gly residues; the sequence is VGGGGGGGGNNSGGGGYG. Low complexity-rich tracts occupy residues 33-44 and 56-73; these read NNNNNNRNSSNN and HHQQ…QQQQ. The Sm domain occupies 84-166; the sequence is RTVFMSMSLV…FLQITATGVV (83 aa). A coiled-coil region spans residues 258–287; it reads EFYKINQSVAEKKAQEIENEKSGNIHLLEE. 5 disordered regions span residues 305-474, 516-557, 615-763, 901-920, and 930-1103; these read VVRK…RESP, TNKS…APKS, LVIK…NNTT, HTMK…VQPQ, and QPQG…NQYH. The span at 312-356 shows a compositional bias: low complexity; it reads PTSTTSTTTSPPTQNPTPSSSVYIPPSKRNNNNNTPSTPSVTSPP. The span at 358-371 shows a compositional bias: basic and acidic residues; the sequence is VDKKHQQTHQDKKQ. Positions 366–403 form a coiled coil; sequence HQDKKQTQQQQQQQQQQQQQQQQQQQQQQQQQQQQQTQ. Low complexity predominate over residues 372–463; the sequence is TQQQQQQQQQ…NNTPTATNTN (92 aa). A compositionally biased stretch (polar residues) spans 516–529; sequence TNKSMNKSGSNIST. Low complexity-rich tracts occupy residues 530 to 544, 637 to 676, and 683 to 694; these read TPVN…NGTP, PTQL…TPST, and TTTPITTTILTE. Residues 691–730 adopt a coiled-coil conformation; it reads ILTENKSDDKEKEKEKEKEKVDEKEKEKEKEKSDEKDKDQ. Over residues 695–741 the composition is skewed to basic and acidic residues; it reads NKSDDKEKEKEKEKEKVDEKEKEKEKEKSDEKDKDQSSTLVEKKDES. The segment covering 742 to 763 has biased composition (low complexity); it reads SSSSNTTTTTTNTTNNNNNNTT. The segment covering 930-957 has biased composition (low complexity); that stretch reads QPQGGVVQPSAGGAPKTMYQQQQQQQQQ. Positions 960-969 are enriched in gly residues; it reads QPGGPMGVQR. Low complexity predominate over residues 974–984; that stretch reads PPQQQPQQQQQ. A compositionally biased stretch (pro residues) spans 1020 to 1031; that stretch reads YAVPHPQYPMPP. Low complexity predominate over residues 1062-1076; it reads QVVSQNSPQQDSPSN.

Belongs to the ataxin-2 family.

This Dictyostelium discoideum (Social amoeba) protein is Ataxin-2 homolog (atxn2).